We begin with the raw amino-acid sequence, 263 residues long: Glucosamine-6-phosphate deaminase 2 (263 aa).

Catalysis depends on Asp82, which acts as the Proton acceptor; for enolization step. Asn151 (for ring-opening step) is an active-site residue. Catalysis depends on His153, which acts as the Proton acceptor; for ring-opening step. Glu158 serves as the catalytic For ring-opening step.

It belongs to the glucosamine/galactosamine-6-phosphate isomerase family. As to quaternary structure, homohexamer.

It carries out the reaction alpha-D-glucosamine 6-phosphate + H2O = beta-D-fructose 6-phosphate + NH4(+). Catalyzes the reversible conversion of alpha-D-glucosamine 6-phosphate (GlcN-6P) into beta-D-fructose 6-phosphate (Fru-6P) and ammonium ion, a regulatory reaction step in de novo uridine diphosphate-N-acetyl-alpha-D-glucosamine (UDP-GlcNAc) biosynthesis via hexosamine pathway. This Giardia intestinalis (Giardia lamblia) protein is Glucosamine-6-phosphate deaminase 2 (GPI2).